We begin with the raw amino-acid sequence, 517 residues long: Probable cytosol aminopeptidase (517 aa).

Lys-279 and Asp-284 together coordinate Mn(2+). The active site involves Lys-291. Mn(2+) contacts are provided by Asp-302, Asp-361, and Glu-363. Arg-365 is a catalytic residue.

It belongs to the peptidase M17 family. Mn(2+) serves as cofactor.

It localises to the cytoplasm. It catalyses the reaction Release of an N-terminal amino acid, Xaa-|-Yaa-, in which Xaa is preferably Leu, but may be other amino acids including Pro although not Arg or Lys, and Yaa may be Pro. Amino acid amides and methyl esters are also readily hydrolyzed, but rates on arylamides are exceedingly low.. The catalysed reaction is Release of an N-terminal amino acid, preferentially leucine, but not glutamic or aspartic acids.. Its function is as follows. Presumably involved in the processing and regular turnover of intracellular proteins. Catalyzes the removal of unsubstituted N-terminal amino acids from various peptides. The protein is Probable cytosol aminopeptidase of Streptomyces coelicolor (strain ATCC BAA-471 / A3(2) / M145).